Reading from the N-terminus, the 281-residue chain is sn-glycerol-3-phosphate transport system permease protein UgpE (281 aa).

The next 6 helical transmembrane spans lie at 16–36 (LILGIAVILFPLYVAFVAATL), 85–105 (FSITLGKITVSMLSAFAIVWF), 113–133 (FFWMIFITLMLPVEVRIFPTV), 142–162 (LDSYAGLTLPLMASATATFLF), 202–222 (ALFVITFIYGWNQYLWPLLII), and 247–267 (WNSVMAAMLLTLIPPVVIVLV). In terms of domain architecture, ABC transmembrane type-1 spans 77 to 268 (LLNSFVMAFS…IPPVVIVLVM (192 aa)).

The protein belongs to the binding-protein-dependent transport system permease family. UgpAE subfamily. In terms of assembly, the complex is composed of two ATP-binding proteins (UgpC), two transmembrane proteins (UgpA and UgpE) and a solute-binding protein (UgpB).

The protein localises to the cell inner membrane. In terms of biological role, part of the ABC transporter complex UgpBAEC involved in sn-glycerol-3-phosphate (G3P) import. Probably responsible for the translocation of the substrate across the membrane. This Escherichia coli O157:H7 protein is sn-glycerol-3-phosphate transport system permease protein UgpE (ugpE).